The chain runs to 269 residues: Tryptophan synthase alpha chain (269 aa).

Catalysis depends on proton acceptor residues glutamate 49 and aspartate 60.

This sequence belongs to the TrpA family. As to quaternary structure, tetramer of two alpha and two beta chains.

It carries out the reaction (1S,2R)-1-C-(indol-3-yl)glycerol 3-phosphate + L-serine = D-glyceraldehyde 3-phosphate + L-tryptophan + H2O. It participates in amino-acid biosynthesis; L-tryptophan biosynthesis; L-tryptophan from chorismate: step 5/5. Functionally, the alpha subunit is responsible for the aldol cleavage of indoleglycerol phosphate to indole and glyceraldehyde 3-phosphate. This Pseudomonas putida (strain ATCC 47054 / DSM 6125 / CFBP 8728 / NCIMB 11950 / KT2440) protein is Tryptophan synthase alpha chain.